Reading from the N-terminus, the 128-residue chain is Small ribosomal subunit protein uS8c (128 aa).

This sequence belongs to the universal ribosomal protein uS8 family. In terms of assembly, part of the 30S ribosomal subunit.

It localises to the plastid. It is found in the chloroplast. One of the primary rRNA binding proteins, it binds directly to 16S rRNA central domain where it helps coordinate assembly of the platform of the 30S subunit. The chain is Small ribosomal subunit protein uS8c (rps8) from Gnetum parvifolium (Small-leaved jointfir).